The primary structure comprises 110 residues: Large ribosomal subunit protein uL22 (110 aa).

This sequence belongs to the universal ribosomal protein uL22 family. As to quaternary structure, part of the 50S ribosomal subunit.

In terms of biological role, this protein binds specifically to 23S rRNA; its binding is stimulated by other ribosomal proteins, e.g. L4, L17, and L20. It is important during the early stages of 50S assembly. It makes multiple contacts with different domains of the 23S rRNA in the assembled 50S subunit and ribosome. Its function is as follows. The globular domain of the protein is located near the polypeptide exit tunnel on the outside of the subunit, while an extended beta-hairpin is found that lines the wall of the exit tunnel in the center of the 70S ribosome. This Teredinibacter turnerae (strain ATCC 39867 / T7901) protein is Large ribosomal subunit protein uL22.